A 618-amino-acid chain; its full sequence is Pyocin-S1 (618 aa).

Belongs to the colicin/pyosin nuclease family. Purified pyocin S1 makes up a complex of the two (large and small) proteins. The large protein, but not the pyocin complex, shows in vitro DNase activity.

In terms of biological role, causes breakdown of chromosomal DNA as well as complete inhibition of lipid synthesis in sensitive cells. The polypeptide is Pyocin-S1 (pys1) (Pseudomonas aeruginosa).